The primary structure comprises 817 residues: Alpha-bisabolene synthase (817 aa).

Mg(2+)-binding residues include aspartate 566, aspartate 570, aspartate 713, threonine 717, and glutamate 721. The DDXXD motif signature appears at aspartate 566 to aspartate 570.

This sequence belongs to the terpene synthase family. Tpsd subfamily. The cofactor is Mg(2+). Mn(2+) is required as a cofactor. It depends on K(+) as a cofactor.

The protein localises to the cytoplasm. It carries out the reaction (2E,6E)-farnesyl diphosphate = (E,R)-alpha-bisabolene + diphosphate. It participates in terpene metabolism; oleoresin biosynthesis. Converts farnesyl diphosphate to alpha-bisabolene. Involved in defensive oleoresin formation in conifers in response to insect attack or other injury. Involved in sesquiterpene (C15) olefins biosynthesis. This is Alpha-bisabolene synthase (ag1) from Abies grandis (Grand fir).